The sequence spans 229 residues: Geodin cluster transcription factor (229 aa).

Residues 12–39 (CHACAASKVRCSKEKPTCSRCSKRGTTC) constitute a DNA-binding region (zn(2)-C6 fungal-type). 2 disordered regions span residues 50 to 100 (KQLN…PGTT) and 141 to 169 (TANS…RPPT). 2 stretches are compositionally biased toward polar residues: residues 51 to 71 (QLNN…SLAT) and 153 to 164 (ITSSHNTSSNSP).

Its subcellular location is the nucleus. Transcription factor that regulates the expression of the gene cluster that mediates the biosynthesis of geodin, an intermediate in the biosynthesis of other natural products. This Aspergillus terreus (strain NIH 2624 / FGSC A1156) protein is Geodin cluster transcription factor.